A 597-amino-acid chain; its full sequence is Elongation factor 4 (597 aa).

Positions 2–184 (KHIRNFSIIA…TIVKSIPAPE (183 aa)) constitute a tr-type G domain. Residues 14–19 (DHGKST) and 131–134 (NKID) contribute to the GTP site.

The protein belongs to the TRAFAC class translation factor GTPase superfamily. Classic translation factor GTPase family. LepA subfamily.

It localises to the cell inner membrane. The enzyme catalyses GTP + H2O = GDP + phosphate + H(+). Its function is as follows. Required for accurate and efficient protein synthesis under certain stress conditions. May act as a fidelity factor of the translation reaction, by catalyzing a one-codon backward translocation of tRNAs on improperly translocated ribosomes. Back-translocation proceeds from a post-translocation (POST) complex to a pre-translocation (PRE) complex, thus giving elongation factor G a second chance to translocate the tRNAs correctly. Binds to ribosomes in a GTP-dependent manner. The sequence is that of Elongation factor 4 from Aliivibrio fischeri (strain MJ11) (Vibrio fischeri).